The primary structure comprises 241 residues: Ubiquinone biosynthesis O-methyltransferase (241 aa).

S-adenosyl-L-methionine contacts are provided by R46, G66, D87, and M131.

It belongs to the methyltransferase superfamily. UbiG/COQ3 family.

The enzyme catalyses a 3-demethylubiquinol + S-adenosyl-L-methionine = a ubiquinol + S-adenosyl-L-homocysteine + H(+). The catalysed reaction is a 3-(all-trans-polyprenyl)benzene-1,2-diol + S-adenosyl-L-methionine = a 2-methoxy-6-(all-trans-polyprenyl)phenol + S-adenosyl-L-homocysteine + H(+). It participates in cofactor biosynthesis; ubiquinone biosynthesis. O-methyltransferase that catalyzes the 2 O-methylation steps in the ubiquinone biosynthetic pathway. The polypeptide is Ubiquinone biosynthesis O-methyltransferase (Bordetella pertussis (strain Tohama I / ATCC BAA-589 / NCTC 13251)).